A 189-amino-acid polypeptide reads, in one-letter code: MSSLSLYTVQAVLILDQQGERIYAKYYQPPHRSDEGHQLLFNSVKKQKEFEKQLYRKTHKQDSEILIFEDHLVLYKEYIDITIYLVASLEENEIVLQQGFSAIRGALDLILNSGMDKKNIQENYDMVLLAIDETIDNGVILETDSNTIASRVSKPPTNEPQMALDLDKGFLGAWGFAKSKFQERLQQGL.

Belongs to the adaptor complexes small subunit family. Oligomeric complex that consists of at least the alpha, beta, beta', gamma, delta, epsilon and zeta subunits.

The protein localises to the cytoplasm. Its subcellular location is the golgi apparatus membrane. It localises to the cytoplasmic vesicle. The protein resides in the COPI-coated vesicle membrane. The coatomer is a cytosolic protein complex that binds to dilysine motifs and reversibly associates with Golgi non-clathrin-coated vesicles, which further mediate biosynthetic protein transport from the ER, via the Golgi up to the trans Golgi network. Coatomer complex is required for budding from Golgi membranes, and is essential for the retrograde Golgi-to-ER transport of dilysine-tagged proteins. The zeta subunit may be involved in regulating the coat assembly and, hence, the rate of biosynthetic protein transport due to its association-dissociation properties with the coatomer complex. This is Coatomer subunit zeta (RET3) from Saccharomyces cerevisiae (strain ATCC 204508 / S288c) (Baker's yeast).